The following is a 23-amino-acid chain: Acetylcholine receptor subunit gamma (23 aa).

Belongs to the ligand-gated ion channel (TC 1.A.9) family. Acetylcholine receptor (TC 1.A.9.1) subfamily. Gamma/CHRNG sub-subfamily. Pentamer of two alpha chains, and one each of the beta, delta, and gamma chains.

It localises to the postsynaptic cell membrane. The protein resides in the cell membrane. The enzyme catalyses K(+)(in) = K(+)(out). It carries out the reaction Na(+)(in) = Na(+)(out). Functionally, after binding acetylcholine, the AChR responds by an extensive change in conformation that affects all subunits and leads to opening of an ion-conducting channel across the plasma membrane. In Electrophorus electricus (Electric eel), this protein is Acetylcholine receptor subunit gamma (chrng).